A 208-amino-acid polypeptide reads, in one-letter code: Uracil phosphoribosyltransferase (208 aa).

Residues R78, R103, and D130–S138 contribute to the 5-phospho-alpha-D-ribose 1-diphosphate site. Uracil-binding positions include I193 and G198 to A200. D199 contributes to the 5-phospho-alpha-D-ribose 1-diphosphate binding site.

This sequence belongs to the UPRTase family. It depends on Mg(2+) as a cofactor.

The catalysed reaction is UMP + diphosphate = 5-phospho-alpha-D-ribose 1-diphosphate + uracil. It functions in the pathway pyrimidine metabolism; UMP biosynthesis via salvage pathway; UMP from uracil: step 1/1. Its activity is regulated as follows. Allosterically activated by GTP. Functionally, catalyzes the conversion of uracil and 5-phospho-alpha-D-ribose 1-diphosphate (PRPP) to UMP and diphosphate. The chain is Uracil phosphoribosyltransferase from Neisseria meningitidis serogroup A / serotype 4A (strain DSM 15465 / Z2491).